The following is a 564-amino-acid chain: Proline--tRNA ligase 1 (564 aa).

The protein belongs to the class-II aminoacyl-tRNA synthetase family. ProS type 1 subfamily. In terms of assembly, homodimer.

It is found in the cytoplasm. It catalyses the reaction tRNA(Pro) + L-proline + ATP = L-prolyl-tRNA(Pro) + AMP + diphosphate. Functionally, catalyzes the attachment of proline to tRNA(Pro) in a two-step reaction: proline is first activated by ATP to form Pro-AMP and then transferred to the acceptor end of tRNA(Pro). As ProRS can inadvertently accommodate and process non-cognate amino acids such as alanine and cysteine, to avoid such errors it has two additional distinct editing activities against alanine. One activity is designated as 'pretransfer' editing and involves the tRNA(Pro)-independent hydrolysis of activated Ala-AMP. The other activity is designated 'posttransfer' editing and involves deacylation of mischarged Ala-tRNA(Pro). The misacylated Cys-tRNA(Pro) is not edited by ProRS. The chain is Proline--tRNA ligase 1 from Streptomyces avermitilis (strain ATCC 31267 / DSM 46492 / JCM 5070 / NBRC 14893 / NCIMB 12804 / NRRL 8165 / MA-4680).